The following is a 445-amino-acid chain: Phosphoglucosamine mutase (445 aa).

Ser102 (phosphoserine intermediate) is an active-site residue. Positions 102, 241, 243, and 245 each coordinate Mg(2+). Ser102 carries the post-translational modification Phosphoserine.

The protein belongs to the phosphohexose mutase family. It depends on Mg(2+) as a cofactor. Activated by phosphorylation.

The catalysed reaction is alpha-D-glucosamine 1-phosphate = D-glucosamine 6-phosphate. In terms of biological role, catalyzes the conversion of glucosamine-6-phosphate to glucosamine-1-phosphate. This is Phosphoglucosamine mutase from Pectobacterium atrosepticum (strain SCRI 1043 / ATCC BAA-672) (Erwinia carotovora subsp. atroseptica).